Consider the following 440-residue polypeptide: 5-hydroxytryptamine receptor 6 (440 aa).

At 1-27 (MVPEPGPTANSTPAWGAGPPSAPGGSG) the chain is on the extracellular side. Residues 28-52 (WVAAALCVVIALTAAANSLLIALIC) traverse the membrane as a helical segment. The Cytoplasmic portion of the chain corresponds to 53–62 (TQPALRNTSN). A helical transmembrane segment spans residues 63–88 (FFLVSLFTSDLMVGLVVMPPAMLNAL). The Extracellular segment spans residues 89 to 96 (YGRWVLAR). A helical membrane pass occupies residues 97 to 122 (GLCLLWTAFDVMCCSASILNLCLISL). Cys99 and Cys180 are disulfide-bonded. Asp106 is a serotonin binding site. Residues 123–142 (DRYLLILSPLRYKLRMTPLR) are Cytoplasmic-facing. Residues 143 to 167 (ALALVLGAWSLAALASFLPLLLGWH) traverse the membrane as a helical segment. The Extracellular segment spans residues 168 to 185 (ELGHARPPVPGQCRLLAS). The helical transmembrane segment at 186 to 209 (LPFVLVASGLTFFLPSGAICFTYC) threads the bilayer. Residues 210 to 266 (RILLAARKQAVQVASLTTGMASQASETLQVPRTPRPGVESADSRRLATKHSRKALKA) lie on the Cytoplasmic side of the membrane. Residues 267 to 293 (SLTLGILLGMFFVTWLPFFVANIVQAV) traverse the membrane as a helical segment. Residue Asn288 participates in serotonin binding. Residues 294–299 (CDCISP) are Extracellular-facing. Residues 300-323 (GLFDVLTWLGYCNSTMNPIIYPLF) traverse the membrane as a helical segment. At 324-440 (MRDFKRALGR…RPHPLGIPTN (117 aa)) the chain is on the cytoplasmic side. Positions 346-392 (ASLASPSLRTSHSGPRPGLSLQQVLPLPLPPDSDSDSDAGSGGSSGL) are disordered. A compositionally biased stretch (polar residues) spans 347 to 358 (SLASPSLRTSHS). Low complexity predominate over residues 362-371 (PGLSLQQVLP).

The protein belongs to the G-protein coupled receptor 1 family. As to quaternary structure, interacts with MTOR, RPTOR and NF1. Interacts with CDK5. Expressed in several human brain regions, most prominently in the caudate nucleus.

Its subcellular location is the cell membrane. Its function is as follows. G-protein coupled receptor for 5-hydroxytryptamine (serotonin), a biogenic hormone that functions as a neurotransmitter, a hormone and a mitogen. Also has a high affinity for tricyclic psychotropic drugs. Ligand binding causes a conformation change that triggers signaling via guanine nucleotide-binding proteins (G proteins) and modulates the activity of downstream effectors. HTR6 is coupled to G(s) G alpha proteins and mediates activation of adenylate cyclase activity. Controls pyramidal neurons migration during corticogenesis, through the regulation of CDK5 activity. Is an activator of mTOR signaling. The chain is 5-hydroxytryptamine receptor 6 from Homo sapiens (Human).